Reading from the N-terminus, the 351-residue chain is MALPFQKGLEKYKNIDEDELLGKLSEEELKQLENVLDDLDPESATLPAGFRQKDQTQKAATGPFDREHLLMYLEKEALEQKDREDFVPFTGEKKGRVFIPKEKPVETRKEEKVTLDPELEEALASASDTELYDLAAVLGVHNLLNNPKFDEETTNGQGRKGPVRNVVKGEKAKPVFEEPPNPTNVEASLQQMKANDPSLQEVNLNNIKNIPIPTLKEFAKALETNTHVRKFSLAATRSNDPVALAFAEMLKVNKTLKSLNVESNFITGAGILALVEALRENDTLTEIKIDNQRQQLGTAVEMEIAQMLEENSRILKFGYQFTKQGPRTRVAAAITKNNDLVRKKRVEGDRR.

A Phosphoserine modification is found at Ser-25.

This sequence belongs to the tropomodulin family. Binds to the N-terminus of tropomyosin and to actin. Binds to TMBr3 as well as to other low molecular mass tropomyosins (TM5a or TM5), but not to high molecular mass tropomyosins (TM2 or TMBr1). Neuronal-tissue specific.

It localises to the cytoplasm. Its subcellular location is the cytoskeleton. Its function is as follows. Blocks the elongation and depolymerization of the actin filaments at the pointed end. The Tmod/TM complex contributes to the formation of the short actin protofilament, which in turn defines the geometry of the membrane skeleton. This Rattus norvegicus (Rat) protein is Tropomodulin-2 (Tmod2).